A 66-amino-acid polypeptide reads, in one-letter code: Cell division protein ZapB (66 aa).

Residues 3–59 adopt a coiled-coil conformation; sequence LELLSQLETKIQATLENIELLKMELEEEKQKSTQLAEKNQKLQQDLNSWSDKVNGLV.

The protein belongs to the ZapB family. As to quaternary structure, homodimer. The ends of the coiled-coil dimer bind to each other, forming polymers. Interacts with FtsZ.

It localises to the cytoplasm. In terms of biological role, non-essential, abundant cell division factor that is required for proper Z-ring formation. It is recruited early to the divisome by direct interaction with FtsZ, stimulating Z-ring assembly and thereby promoting cell division earlier in the cell cycle. Its recruitment to the Z-ring requires functional FtsA or ZipA. The protein is Cell division protein ZapB of Shewanella denitrificans (strain OS217 / ATCC BAA-1090 / DSM 15013).